The chain runs to 222 residues: Eukaryotic translation initiation factor 3 subunit K (222 aa).

The 163-residue stretch at 46–208 folds into the PCI domain; the sequence is YDLEANLAVL…KIKTKNITEK (163 aa).

This sequence belongs to the eIF-3 subunit K family. As to quaternary structure, component of the eukaryotic translation initiation factor 3 (eIF-3) complex. The eIF-3 complex interacts with pix.

The protein resides in the cytoplasm. Functionally, component of the eukaryotic translation initiation factor 3 (eIF-3) complex, which is involved in protein synthesis of a specialized repertoire of mRNAs and, together with other initiation factors, stimulates binding of mRNA and methionyl-tRNAi to the 40S ribosome. The eIF-3 complex specifically targets and initiates translation of a subset of mRNAs involved in cell proliferation. In Drosophila sechellia (Fruit fly), this protein is Eukaryotic translation initiation factor 3 subunit K.